Here is a 308-residue protein sequence, read N- to C-terminus: Ribosomal protein uL3 glutamine methyltransferase (308 aa).

This sequence belongs to the protein N5-glutamine methyltransferase family. PrmB subfamily.

The enzyme catalyses L-glutaminyl-[ribosomal protein uL3] + S-adenosyl-L-methionine = N(5)-methyl-L-glutaminyl-[ribosomal protein uL3] + S-adenosyl-L-homocysteine + H(+). Its function is as follows. Methylates large ribosomal subunit protein uL3 on a specific glutamine residue. The polypeptide is Ribosomal protein uL3 glutamine methyltransferase (Xanthomonas campestris pv. campestris (strain ATCC 33913 / DSM 3586 / NCPPB 528 / LMG 568 / P 25)).